A 409-amino-acid chain; its full sequence is Mitochondrial protein import protein MAS5 (409 aa).

A necessary for HAP1 repression in the absence of heme region spans residues 1-172 (MVKETKFYDI…NGQGIKFVTR (172 aa)). Positions 4–72 (ETKFYDILGV…RDIYDQFGED (69 aa)) constitute a J domain. Substrate is bound by residues Ile116 and 135-137 (LAL). The CR-type zinc finger occupies 130–213 (GRTAKLALNK…CNGKKVENER (84 aa)). Residues Cys143, Cys146, Cys159, Cys162, Cys185, and Cys188 each coordinate Zn(2+). CXXCXGXG motif repeat units follow at residues 143 to 150 (CKECEGRG), 159 to 166 (CTSCNGQG), and 185 to 192 (CDVCHGTG). Lys198 participates in a covalent cross-link: Glycyl lysine isopeptide (Lys-Gly) (interchain with G-Cter in ubiquitin). Zn(2+)-binding residues include Cys201 and Cys204. Residues 201–208 (CKSCNGKK) form a CXXCXGXG motif repeat. Substrate-binding positions include 215 to 216 (IL) and 247 to 249 (VVF). The tract at residues 382 to 409 (RTRASRGGANYDSDEEEQGGEGVQCASQ) is disordered. The residue at position 406 (Cys406) is a Cysteine methyl ester. The S-farnesyl cysteine moiety is linked to residue Cys406. Residues 407-409 (ASQ) constitute a propeptide, removed in mature form.

In terms of assembly, homodimer. Interacts with HAP1. Component of the HMC including HAP1, SRO9 and YDJ1.

The protein resides in the cytoplasm. It localises to the perinuclear region. Functionally, probably involved in mitochondrial protein import. Is also required for efficient translocation of pre-pro-alpha-factor. Involved in heme regulation of HAP1, as a component of the high-molecular-weight (HMC) complex. The chain is Mitochondrial protein import protein MAS5 (YDJ1) from Saccharomyces cerevisiae (strain ATCC 204508 / S288c) (Baker's yeast).